The chain runs to 233 residues: Favin (233 aa).

Residues Glu-120 and Asp-122 each coordinate Mn(2+). Asp-122, Phe-124, Asn-126, and Asp-130 together coordinate Ca(2+). Mn(2+)-binding residues include Asp-130 and His-137. Asn-168 carries an N-linked (GlcNAc...) asparagine glycan.

It belongs to the leguminous lectin family. In terms of assembly, heterodimer of an alpha and a beta chain.

This is Favin from Vicia faba (Broad bean).